A 95-amino-acid chain; its full sequence is Integration host factor subunit beta (95 aa).

It belongs to the bacterial histone-like protein family. In terms of assembly, heterodimer of an alpha and a beta chain.

Functionally, this protein is one of the two subunits of integration host factor, a specific DNA-binding protein that functions in genetic recombination as well as in transcriptional and translational control. Involved in hydrogenase gene expression. The sequence is that of Integration host factor subunit beta (ihfB) from Rhodobacter capsulatus (Rhodopseudomonas capsulata).